The sequence spans 197 residues: Carnitine operon protein CaiE (197 aa).

A disordered region spans residues 177-197 (TAPEANRPRLRGTTEVKPKGQ). Over residues 188–197 (GTTEVKPKGQ) the composition is skewed to basic and acidic residues.

This sequence belongs to the transferase hexapeptide repeat family.

It functions in the pathway amine and polyamine metabolism; carnitine metabolism. Its function is as follows. Overproduction of CaiE stimulates the activity of CaiB and CaiD. This chain is Carnitine operon protein CaiE, found in Proteus sp. (strain LE138).